A 189-amino-acid chain; its full sequence is Putative biopolymer transport protein ExbB-like 1 (189 aa).

3 helical membrane passes run 14-34, 99-119, and 147-167; these read FVTTLVLVWISLYLVMTLWVF, LVVLSIISSTAPFIGLFGTVV, and LIATAAGILAAIPAYSFYLIL.

The protein belongs to the ExbB/TolQ family.

Its subcellular location is the cell inner membrane. This Helicobacter pylori (strain ATCC 700392 / 26695) (Campylobacter pylori) protein is Putative biopolymer transport protein ExbB-like 1.